A 191-amino-acid chain; its full sequence is Adenylate kinase (191 aa).

Residue 12 to 17 coordinates ATP; the sequence is GSGKTT. An NMP region spans residues 34-63; the sequence is STGDLLRAESAKKTERGLLIEKFTSQGELV. AMP-binding positions include Thr35, Arg40, 61-63, 88-91, and Gln95; these read ELV and GYPR. Residues 130 to 136 form an LID region; sequence GRSRGAD. Position 131 (Arg131) interacts with ATP. The AMP site is built by Arg133 and Arg145. Arg173 lines the ATP pocket.

The protein belongs to the adenylate kinase family. In terms of assembly, monomer.

It is found in the cytoplasm. It carries out the reaction AMP + ATP = 2 ADP. It functions in the pathway purine metabolism; AMP biosynthesis via salvage pathway; AMP from ADP: step 1/1. Functionally, catalyzes the reversible transfer of the terminal phosphate group between ATP and AMP. Plays an important role in cellular energy homeostasis and in adenine nucleotide metabolism. The sequence is that of Adenylate kinase from Helicobacter pylori (strain G27).